A 217-amino-acid polypeptide reads, in one-letter code: MRFNIDEWEPKTTIGRMVKEGQITDIDYILDNNLPILEPEIVDALLPDLEEKVLDVKLVQRMHKSGRRARFRATVVVGNRNGYVGVGKGKAKEVGPAIRKAIAQAKKNIIRVKRGCGSWECGCGTPHSIPYKGYGKCGSTAIEILPAPKGVGLVAGDVAKAVLGLAGIKDVWTKTFGETRTTYNFAMATFEALKSLNFTRTMEKHKEKLGIVEGRVL.

The region spanning 49–112 (LEEKVLDVKL…AQAKKNIIRV (64 aa)) is the S5 DRBM domain.

The protein belongs to the universal ribosomal protein uS5 family. As to quaternary structure, part of the 30S ribosomal subunit. Contacts protein S4.

With S4 and S12 plays an important role in translational accuracy. This chain is Small ribosomal subunit protein uS5, found in Methanocaldococcus jannaschii (strain ATCC 43067 / DSM 2661 / JAL-1 / JCM 10045 / NBRC 100440) (Methanococcus jannaschii).